We begin with the raw amino-acid sequence, 158 residues long: Protein EOLA1 (158 aa).

Residues 6–92 (LSFRQPYAGF…IAGLVDIGET (87 aa)) enclose the ASCH domain.

The protein belongs to the EOLA family. In terms of assembly, interacts with MT2A. Expressed primarily in heart, skeletal muscle, kidney, liver and placenta. Relatively high level of expression in spleen, colon and small intestine. Almost no expression in brain, thymus, lung and peripheral blood leukocytes. Expressed in epithelial cells (at protein level).

May play a role in cell protection during the inflammatory response. In epithelial cells, negatively regulates IL6 production and apoptosis through the regulation of MT2A expression. The sequence is that of Protein EOLA1 from Homo sapiens (Human).